Reading from the N-terminus, the 624-residue chain is Ubiquilin-2 (624 aa).

2 disordered regions span residues 1 to 32 (MAENGESSGPPRPSRGPAAAQGSAAAPAEPKI) and 106 to 141 (NRPQGQSTQPSNAAGTNTTSASTPRSNSTPISTNSN). N-acetylalanine is present on Ala2. The span at 15-32 (RGPAAAQGSAAAPAEPKI) shows a compositional bias: low complexity. The Ubiquitin-like domain occupies 33–107 (IKVTVKTPKE…VHLVIKSQNR (75 aa)). Polar residues predominate over residues 106-115 (NRPQGQSTQP). Residues 116 to 141 (SNAAGTNTTSASTPRSNSTPISTNSN) show a composition bias toward low complexity. 2 STI1 domains span residues 178 to 206 (SPEMMIQIMENPFVQSMLSNPDLMRQLIM) and 208 to 247 (NPQMQQLIQRNPEISHLLNNPDIMRQTLEIARNPAMMQEM). The disordered stretch occupies residues 287-349 (FGGNPFASVG…SGSGNSSSNA (63 aa)). Over residues 294–304 (SVGSSSSSGEG) the composition is skewed to low complexity. Pro residues predominate over residues 316 to 325 (LPNPWAPPPA). Residues 326-349 (TQSSATTSTTTSTGSGSGNSSSNA) show a composition bias toward low complexity. 2 STI1 domains span residues 379–426 (NPQL…QEQM) and 430–462 (LPAFLQQMQNPDTLSAMSNPRAMQALMQIQQGL). Tandem repeats lie at residues 491-493 (PVG), 494-496 (PVT), 497-499 (PIG), 500-502 (PIG), 503-505 (PIV), 506-508 (PFT), 509-511 (PIG), 512-514 (PIG), 515-517 (PIG), 518-520 (PTG), 521-523 (PAA), and 524-526 (PPG). The 12 X 3 AA tandem repeats of P-X-X stretch occupies residues 491 to 526 (PVGPVTPIGPIGPIVPFTPIGPIGPIGPTGPAAPPG). The tract at residues 512–556 (PIGPIGPTGPAAPPGSTGSGGPTGPTVSSAAPSETTSPTSESGPN) is disordered. The span at 535 to 553 (GPTVSSAAPSETTSPTSES) shows a compositional bias: low complexity. Residues 581–621 (RFQQQLEQLNAMGFLNREANLQALIATGGDINAAIERLLGS) form the UBA domain.

In terms of assembly, homodimer. Forms heterodimer with UBQLN1. Binds UBE3A and BTRC. Interacts with the 19S proteasome subunit. Interacts with C9orf72. Interacts with HNRNPA1 and HNRNPU. Found in a complex with UBQLN1 and MAP1LC3A/B/C. Interacts with EPS15, EPN1 and EPN2. Interacts with HERPUD1. Interacts with RAD23A. Interacts with TARDBP. Interacts (via C-terminus) with FAF2 (via N-terminus). Interacts with UBQLN4. Binds CD47. In terms of processing, degraded during macroautophagy.

The protein resides in the cytoplasm. Its subcellular location is the nucleus. It localises to the membrane. The protein localises to the cytoplasmic vesicle. It is found in the autophagosome. Its function is as follows. Plays an important role in the regulation of different protein degradation mechanisms and pathways including ubiquitin-proteasome system (UPS), autophagy and the endoplasmic reticulum-associated protein degradation (ERAD) pathway. Mediates the proteasomal targeting of misfolded or accumulated proteins for degradation by binding (via UBA domain) to their polyubiquitin chains and by interacting (via ubiquitin-like domain) with the subunits of the proteasome. Plays a role in the ERAD pathway via its interaction with ER-localized proteins FAF2/UBXD8 and HERPUD1 and may form a link between the polyubiquitinated ERAD substrates and the proteasome. Involved in the regulation of macroautophagy and autophagosome formation; required for maturation of autophagy-related protein LC3 from the cytosolic form LC3-I to the membrane-bound form LC3-II and may assist in the maturation of autophagosomes to autolysosomes by mediating autophagosome-lysosome fusion. Negatively regulates the endocytosis of GPCR receptors: AVPR2 and ADRB2, by specifically reducing the rate at which receptor-arrestin complexes concentrate in clathrin-coated pits (CCPs). This is Ubiquilin-2 (UBQLN2) from Homo sapiens (Human).